A 254-amino-acid polypeptide reads, in one-letter code: MSFTVIIPARFASSRLPGKPLADIAGKPMIQHVFEKALQSGANRVIIATDNENVADVVKNFGAEVCMTSVNHNSGTERLAEVVEKLAIPDNEIIVNIQGDEPLIPPVIVRQVADNLAKFNVNMASLAVKIHDGEELFNPNAVKVLTDKDGYVLYFSRSVIPYDRDQFMNLQDVQKVQLADAYLRHIGIYAYRSGFIKQYMQWAPTQLENLEKLEQLRVLYNGERIHVELAKEVPAVGVDTAEDLEKVRLILAKD.

This sequence belongs to the KdsB family.

The protein localises to the cytoplasm. It carries out the reaction 3-deoxy-alpha-D-manno-oct-2-ulosonate + CTP = CMP-3-deoxy-beta-D-manno-octulosonate + diphosphate. It functions in the pathway nucleotide-sugar biosynthesis; CMP-3-deoxy-D-manno-octulosonate biosynthesis; CMP-3-deoxy-D-manno-octulosonate from 3-deoxy-D-manno-octulosonate and CTP: step 1/1. Its pathway is bacterial outer membrane biogenesis; lipopolysaccharide biosynthesis. In terms of biological role, activates KDO (a required 8-carbon sugar) for incorporation into bacterial lipopolysaccharide in Gram-negative bacteria. This is 3-deoxy-manno-octulosonate cytidylyltransferase from Haemophilus influenzae (strain PittGG).